An 89-amino-acid polypeptide reads, in one-letter code: SAP domain-containing new25 (89 aa).

The 35-residue stretch at 44–78 (PSQWSKKQLIEYCKKNSLKTSGSHEELVIRVQNHL) folds into the SAP domain.

This chain is SAP domain-containing new25 (new25), found in Schizosaccharomyces pombe (strain 972 / ATCC 24843) (Fission yeast).